A 419-amino-acid polypeptide reads, in one-letter code: Innexin-2 (419 aa).

Helical transmembrane passes span 33 to 53, 108 to 128, 184 to 204, and 270 to 290; these read AWFT…KQYF, PLVL…WNLF, INYF…MVLL, and LYIC…AGMI.

The protein belongs to the pannexin family.

Its subcellular location is the cell membrane. It localises to the cell junction. It is found in the gap junction. Structural component of the gap junctions. This chain is Innexin-2 (inx-2), found in Caenorhabditis elegans.